An 884-amino-acid polypeptide reads, in one-letter code: Cytosolic carboxypeptidase-like protein 5 (884 aa).

The Peptidase M14 domain maps to 157–570; the sequence is YPFSYSDCQD…AMAIAALDMA (414 aa). 2 residues coordinate Zn(2+): histidine 252 and glutamate 255. Disordered regions lie at residues 343-364 and 376-401; these read HPQS…PLSD and HLGH…KASG. Residue histidine 434 coordinates Zn(2+). The active-site Proton donor/acceptor is the glutamate 516. Disordered regions lie at residues 603–737 and 784–859; these read LSST…HSTG and QVRP…RICY. Over residues 620–635 the composition is skewed to polar residues; sequence PPRSNSGLPVSCSENP. 2 stretches are compositionally biased toward low complexity: residues 641 to 666 and 714 to 737; these read SFST…NSPS and PTSS…HSTG. Serine 839 carries the phosphoserine modification. Residues 846-857 show a composition bias toward polar residues; sequence ISCSLSDSQSRI.

It belongs to the peptidase M14 family. It depends on Zn(2+) as a cofactor.

The protein resides in the cytoplasm. It localises to the cytosol. It is found in the nucleus. The protein localises to the cytoskeleton. Its subcellular location is the spindle. The protein resides in the midbody. The catalysed reaction is gamma-L-glutamyl-L-glutamyl-[protein] + H2O = L-glutamyl-[protein] + L-glutamate. It carries out the reaction (L-glutamyl)(n+1)-gamma-L-glutamyl-L-glutamyl-[protein] + H2O = (L-glutamyl)(n)-gamma-L-glutamyl-L-glutamyl-[protein] + L-glutamate. The enzyme catalyses C-terminal L-alpha-aminoacyl-L-glutamyl-[tubulin] + H2O = C-terminal L-alpha-aminoacyl-[tubulin] + L-glutamate. It catalyses the reaction C-terminal L-alpha-aminoacyl-L-glutamyl-L-glutamyl-[tubulin] + H2O = C-terminal L-alpha-aminoacyl-L-glutamyl-[tubulin] + L-glutamate. Functionally, metallocarboxypeptidase that mediates deglutamylation of tubulin and non-tubulin target proteins. Catalyzes the removal of polyglutamate side chains present on the gamma-carboxyl group of glutamate residues within the C-terminal tail of alpha- and beta-tubulin. Cleaves alpha- and gamma-linked polyglutamate tubulin side-chain, as well as the branching point glutamate. Also catalyzes the removal of alpha-linked glutamate residues from the carboxy-terminus of alpha-tubulin. Mediates deglutamylation of nucleotidyltransferase CGAS, leading to CGAS antiviral defense response activation. This is Cytosolic carboxypeptidase-like protein 5 (AGBL5) from Ailuropoda melanoleuca (Giant panda).